A 106-amino-acid polypeptide reads, in one-letter code: UPF0235 protein OCAR_4310/OCA5_c02140 (106 aa).

This sequence belongs to the UPF0235 family.

This Afipia carboxidovorans (strain ATCC 49405 / DSM 1227 / KCTC 32145 / OM5) (Oligotropha carboxidovorans) protein is UPF0235 protein OCAR_4310/OCA5_c02140.